The sequence spans 252 residues: MKTVTVKDLVIGTGAPKIIVSLMAKDIARVKSEALAYREADFDILEWRVDHFADLSNVESVMAAAKILRETMPEKPLLFTFRSAKEGGEQAISTEAYIALNRAAIDSGLVDMIDLELFTGDDQVKETVAYAHAHDVKVVMSNHDFHKTPEAEEIIARLRKMQSFDADIPKIALMPQSTSDVLTLLTATLEMQEQYADRPIITMSMAKTGVISRLAGEVFGSAATFGAVKKASAPGQISVNDLRTVLTILHQA.

3-dehydroquinate is bound by residues serine 21, 46 to 48 (EWR), and arginine 82. The Proton donor/acceptor role is filled by histidine 143. Lysine 170 (schiff-base intermediate with substrate) is an active-site residue. 3-dehydroquinate-binding residues include arginine 213, serine 232, and glutamine 236.

The protein belongs to the type-I 3-dehydroquinase family. Homodimer.

It catalyses the reaction 3-dehydroquinate = 3-dehydroshikimate + H2O. It functions in the pathway metabolic intermediate biosynthesis; chorismate biosynthesis; chorismate from D-erythrose 4-phosphate and phosphoenolpyruvate: step 3/7. Functionally, involved in the third step of the chorismate pathway, which leads to the biosynthesis of aromatic amino acids. Catalyzes the cis-dehydration of 3-dehydroquinate (DHQ) and introduces the first double bond of the aromatic ring to yield 3-dehydroshikimate. The polypeptide is 3-dehydroquinate dehydratase (Escherichia coli (strain SE11)).